A 107-amino-acid polypeptide reads, in one-letter code: Small polypeptide DEVIL 9 (107 aa).

Over residues 1-12 the composition is skewed to basic and acidic residues; it reads MDEKWRLSKKDA. Residues 1 to 79 are disordered; that stretch reads MDEKWRLSKK…EKGSITQKYS (79 aa). A helical transmembrane segment spans residues 9-29; that stretch reads KKDALAASCSSSSTSSKSKFS. The segment covering 13 to 65 has biased composition (low complexity); it reads LAASCSSSSTSSKSKFSRSFSTSASSSKAPAFVRSSSTKCSVPSSSSSSISRS. Residues 73–104 are required for DVL/RTFL small polypeptide activity; the sequence is SITQKYSSLAKEQKGRFYIMRRCVAMLVCWHK.

This sequence belongs to the DVL/RTFL small polypeptides family.

It localises to the cell membrane. Small polypeptide acting as a regulatory molecule which coordinates cellular responses required for differentiation, growth and development, probably by restricting polar cell proliferation in lateral organs and coordinating socket cell recruitment and differentiation at trichome sites. The protein is Small polypeptide DEVIL 9 of Arabidopsis thaliana (Mouse-ear cress).